We begin with the raw amino-acid sequence, 307 residues long: Branched-chain-amino-acid aminotransferase (307 aa).

Lys160 is subject to N6-(pyridoxal phosphate)lysine.

Belongs to the class-IV pyridoxal-phosphate-dependent aminotransferase family. Pyridoxal 5'-phosphate serves as cofactor.

It catalyses the reaction L-leucine + 2-oxoglutarate = 4-methyl-2-oxopentanoate + L-glutamate. It carries out the reaction L-isoleucine + 2-oxoglutarate = (S)-3-methyl-2-oxopentanoate + L-glutamate. The enzyme catalyses L-valine + 2-oxoglutarate = 3-methyl-2-oxobutanoate + L-glutamate. Its pathway is amino-acid biosynthesis; L-isoleucine biosynthesis; L-isoleucine from 2-oxobutanoate: step 4/4. The protein operates within amino-acid biosynthesis; L-leucine biosynthesis; L-leucine from 3-methyl-2-oxobutanoate: step 4/4. It functions in the pathway amino-acid biosynthesis; L-valine biosynthesis; L-valine from pyruvate: step 4/4. In terms of biological role, acts on leucine, isoleucine and valine. This is Branched-chain-amino-acid aminotransferase (ilvE) from Pseudomonas aeruginosa (strain ATCC 15692 / DSM 22644 / CIP 104116 / JCM 14847 / LMG 12228 / 1C / PRS 101 / PAO1).